We begin with the raw amino-acid sequence, 332 residues long: Glycerol-3-phosphate dehydrogenase [NAD(P)+] (332 aa).

The NADPH site is built by serine 11, tryptophan 12, arginine 32, arginine 33, and lysine 106. Positions 106 and 136 each coordinate sn-glycerol 3-phosphate. Alanine 140 lines the NADPH pocket. Sn-glycerol 3-phosphate contacts are provided by lysine 191, aspartate 244, serine 254, arginine 255, and asparagine 256. Lysine 191 acts as the Proton acceptor in catalysis. Arginine 255 is a binding site for NADPH. NADPH contacts are provided by valine 280 and glutamate 282.

Belongs to the NAD-dependent glycerol-3-phosphate dehydrogenase family.

Its subcellular location is the cytoplasm. It catalyses the reaction sn-glycerol 3-phosphate + NAD(+) = dihydroxyacetone phosphate + NADH + H(+). The enzyme catalyses sn-glycerol 3-phosphate + NADP(+) = dihydroxyacetone phosphate + NADPH + H(+). It participates in membrane lipid metabolism; glycerophospholipid metabolism. Catalyzes the reduction of the glycolytic intermediate dihydroxyacetone phosphate (DHAP) to sn-glycerol 3-phosphate (G3P), the key precursor for phospholipid synthesis. This chain is Glycerol-3-phosphate dehydrogenase [NAD(P)+], found in Corynebacterium aurimucosum (strain ATCC 700975 / DSM 44827 / CIP 107346 / CN-1) (Corynebacterium nigricans).